The chain runs to 359 residues: 3-isopropylmalate dehydrogenase (359 aa).

74–85 (GPKWGTGSVRPE) provides a ligand contact to NAD(+). Substrate contacts are provided by Arg92, Arg102, Arg131, and Asp220. Positions 220, 245, and 249 each coordinate Mg(2+). Position 284–295 (284–295 (GSAPDLPANKVN)) interacts with NAD(+).

The protein belongs to the isocitrate and isopropylmalate dehydrogenases family. As to quaternary structure, homodimer. Requires Mg(2+) as cofactor. The cofactor is Mn(2+).

It localises to the cytoplasm. It carries out the reaction (2R,3S)-3-isopropylmalate + NAD(+) = 4-methyl-2-oxopentanoate + CO2 + NADH. It participates in amino-acid biosynthesis; L-leucine biosynthesis; L-leucine from 3-methyl-2-oxobutanoate: step 3/4. Catalyzes the oxidation of 3-carboxy-2-hydroxy-4-methylpentanoate (3-isopropylmalate) to 3-carboxy-4-methyl-2-oxopentanoate. The product decarboxylates to 4-methyl-2 oxopentanoate. The protein is 3-isopropylmalate dehydrogenase (LEU2) of Kluyveromyces marxianus (Yeast).